The sequence spans 689 residues: 7SK snRNA methylphosphate capping enzyme (689 aa).

An N-acetylmethionine modification is found at methionine 1. The span at methionine 1–proline 10 shows a compositional bias: basic and acidic residues. The interval methionine 1–phenylalanine 167 is disordered. Positions glycine 52–glutamine 84 are enriched in low complexity. 4 positions are modified to phosphoserine: serine 57, serine 60, serine 69, and serine 101. Arginine 117 carries the post-translational modification Omega-N-methylarginine. A phosphoserine mark is found at serine 152, serine 175, and serine 179. The residue at position 213 (threonine 213) is a Phosphothreonine. 3 positions are modified to phosphoserine: serine 216, serine 217, and serine 254. Positions threonine 258–histidine 269 are enriched in basic residues. The disordered stretch occupies residues threonine 258–glutamine 314. Threonine 291 carries the post-translational modification Phosphothreonine. Serine 330 and serine 344 each carry phosphoserine. Positions leucine 332–lysine 407 are disordered. Residues glycine 338 to serine 359 are compositionally biased toward low complexity. Positions serine 360–serine 369 are enriched in basic residues. Serine 390 is subject to Phosphoserine. S-adenosyl-L-methionine contacts are provided by residues tyrosine 422, arginine 433, glycine 451–asparagine 453, aspartate 474–isoleucine 475, asparagine 559–tyrosine 560, and leucine 581. The 256-residue stretch at aspartate 431–serine 686 folds into the Bin3-type SAM domain. Lysine 643 participates in a covalent cross-link: Glycyl lysine isopeptide (Lys-Gly) (interchain with G-Cter in SUMO2).

This sequence belongs to the methyltransferase superfamily. As to quaternary structure, core component of the 7SK RNP complex, at least composed of 7SK RNA, LARP7, MEPCE, HEXIM1 (or HEXIM2) and P-TEFb (composed of CDK9 and CCNT1/cyclin-T1). Interacts with METTL16. Interacts with RBM7; upon genotoxic stress this interaction is enhanced, triggering the release of inactive P-TEFb complex from the core, yielding to P-TEFb complex activation. Dephosphorylated at Ser-152 by the PNUTS-PP1 complex, promoting RNA polymerase II transcription pause-release. As to expression, expressed in chronic myeloid leukemia cells, adrenal gland, brain, cerebellum, kidney, lung, mammary gland and testis. Weakly or not expressed in other tissues.

It localises to the nucleus. It carries out the reaction a 5'-end triphospho-guanosine-ribonucleotide-snRNA + S-adenosyl-L-methionine = a 5'-end methyltriphosphate-guanosine-ribonucleotide-snRNA + S-adenosyl-L-homocysteine. In terms of biological role, S-adenosyl-L-methionine-dependent methyltransferase that adds a methylphosphate cap at the 5'-end of 7SK snRNA (7SK RNA), leading to stabilize it. Also has a non-enzymatic function as part of the 7SK RNP complex: the 7SK RNP complex sequesters the positive transcription elongation factor b (P-TEFb) in a large inactive 7SK RNP complex preventing RNA polymerase II phosphorylation and subsequent transcriptional elongation. The 7SK RNP complex also promotes snRNA gene transcription by RNA polymerase II via interaction with the little elongation complex (LEC). In the 7SK RNP complex, MEPCE is required to stabilize 7SK RNA and facilitate the assembly of 7SK RNP complex. MEPCE has a non-enzymatic function in the 7SK RNP complex; interaction with LARP7 within the 7SK RNP complex occluding its catalytic center. Also required for stability of U6 snRNAs. This Homo sapiens (Human) protein is 7SK snRNA methylphosphate capping enzyme.